Reading from the N-terminus, the 120-residue chain is Large ribosomal subunit protein uL18 (120 aa).

The protein belongs to the universal ribosomal protein uL18 family. As to quaternary structure, part of the 50S ribosomal subunit; part of the 5S rRNA/L5/L18/L25 subcomplex. Contacts the 5S and 23S rRNAs.

In terms of biological role, this is one of the proteins that bind and probably mediate the attachment of the 5S RNA into the large ribosomal subunit, where it forms part of the central protuberance. The protein is Large ribosomal subunit protein uL18 of Finegoldia magna (strain ATCC 29328 / DSM 20472 / WAL 2508) (Peptostreptococcus magnus).